The primary structure comprises 131 residues: Single-stranded DNA-binding protein 2 (131 aa).

The SSB domain occupies 1–103; sequence MYNKVIMIGR…VLASSFQLLE (103 aa). Positions 126-131 match the Important for interaction with partner proteins motif; the sequence is EEELPF.

Homotetramer.

Functionally, plays an important role in DNA replication, recombination and repair. Binds to ssDNA and to an array of partner proteins to recruit them to their sites of action during DNA metabolism. The chain is Single-stranded DNA-binding protein 2 (ssb2) from Streptococcus agalactiae serotype III (strain NEM316).